A 1041-amino-acid polypeptide reads, in one-letter code: Pre-mRNA-splicing factor ATP-dependent RNA helicase DHX16 (1041 aa).

2 disordered regions span residues 101 to 207 (EDSE…AYEE) and 371 to 391 (LQGD…QKES). Phosphoserine is present on residues S103, S106, and S107. Residues 119-130 (QKKRKKRKHLRK) are compositionally biased toward basic residues. A Phosphoserine modification is found at S160. Basic and acidic residues predominate over residues 166–207 (RTERERLQDLEERDAFAERVRQRDKDRTRNVLERSDKKAYEE). The span at 381 to 391 (PTSTQAQQKES) shows a compositional bias: polar residues. In terms of domain architecture, Helicase ATP-binding spans 409 to 573 (LAAIANHQVL…FDDAPVFRIP (165 aa)). 422-429 (GETGSGKT) lines the ATP pocket. A DEAH box motif is present at residues 520-523 (DEAH). Positions 598–771 (SVLQIHVTQP…NVVLLLKSLG (174 aa)) constitute a Helicase C-terminal domain. Residue T712 is modified to Phosphothreonine.

Belongs to the DEAD box helicase family. DEAH subfamily. DDX16/PRP8 sub-subfamily. In terms of assembly, component of pre-catalytic spliceosome complexes. Component of the minor spliceosome, which splices U12-type introns. Interacts with GPKOW. Interacts with TRIM6. Interacts with RIGI. Expressed in the spleen, thyroid and testis. Also expressed in the brain and cerebellum.

The protein resides in the nucleus. Its subcellular location is the nucleoplasm. It is found in the cytoplasm. The enzyme catalyses ATP + H2O = ADP + phosphate + H(+). Functionally, required for pre-mRNA splicing as a component of the spliceosome. Contributes to pre-mRNA splicing after spliceosome formation and prior to the first transesterification reaction. As a component of the minor spliceosome, involved in the splicing of U12-type introns in pre-mRNAs. Also plays a role in innate antiviral response by acting as a pattern recognition receptor sensing splicing signals in viral RNA. Mechanistically, TRIM6 promotes the interaction between unanchored 'Lys-48'-polyubiquitin chains and DHX16, leading to DHX16 interaction with RIGI and ssRNA to amplify RIGI-dependent innate antiviral immune responses. The sequence is that of Pre-mRNA-splicing factor ATP-dependent RNA helicase DHX16 (DHX16) from Homo sapiens (Human).